A 184-amino-acid polypeptide reads, in one-letter code: GTP-binding protein Rheb (184 aa).

Residue Lys-8 forms a Glycyl lysine isopeptide (Lys-Gly) (interchain with G-Cter in ubiquitin) linkage. GDP contacts are provided by Ser-16, Val-17, Gly-18, Lys-19, Ser-20, Ser-21, Val-32, and Asp-33. Ser-16 is a GTP binding site. Residues Gly-18, Lys-19, Ser-20, Ser-21, and Val-32 each coordinate GTP. Ser-20 lines the Mg(2+) pocket. Positions 35, 38, 119, and 122 each coordinate GTP. An Effector region motif is present at residues 35 to 43 (YDPTIENTF). Residue Thr-38 participates in Mg(2+) binding. GDP is bound by residues Asn-119 and Asp-122. Ser-130 carries the phosphoserine; by MAPKAPK5 modification. Ala-150 lines the GDP pocket. Ala-150 is a binding site for GTP. The residue at position 181 (Cys-181) is a Cysteine methyl ester. A lipid anchor (S-farnesyl cysteine) is attached at Cys-181. The propeptide at 182–184 (SVM) is removed in mature form.

It belongs to the small GTPase superfamily. Rheb family. As to quaternary structure, associates with the mTORC1 complex (MTOR, MLST8 and RPTOR) in a guanyl nucleotide-independent manner. Interacts with TSC2. Interacts with MCRS1; the interaction maintains RHEB at the lysosome in its active GTP-bound form and prevents its interaction with the mTORC1 complex inhibitor TSC2, ensuring activation of the mTORC1 complex by RHEB. Interacts (when prenylated) with PDE6D; this promotes release from membranes. In terms of processing, farnesylation is important for efficiently activating mTORC1-mediated signaling. Polyubiquitinated in response to amino acid, promoting its interaction with MTOR and mTORC1 activation. Deubiquitination by ATXN3 promotes recruitment of the TSC-TBC complex and RHEB inactivation by TSC2. Monoubiquitinated at Lys-8 by RNF152, promoting its association with the TSC-TBC complex. Deubiquitinated at Lys-8 by USP4, promoting mTORC1 activation. Post-translationally, phosphorylation by MAPKAPK5 impairs GTP-binding and inactivation. In terms of tissue distribution, ubiquitous. Highest levels observed in skeletal and cardiac muscle.

The protein resides in the endomembrane system. The protein localises to the lysosome membrane. Its subcellular location is the golgi apparatus membrane. It localises to the endoplasmic reticulum membrane. It is found in the cytoplasm. The protein resides in the cytosol. The catalysed reaction is GTP + H2O = GDP + phosphate + H(+). With respect to regulation, alternates between an inactive form bound to GDP and an active form bound to GTP. Inactivated by the TSC-TBC complex via the GTPase activating protein (GAP) domain of TSC2. Autoinhibited by Tyr-35, which constrains the active site conformation, restricting the access of the catalytic Asp-65 to the nucleotide-binding pocket. Specifically inhibited by NR1 (4-bromo-6-(3,4-dichlorophenylthio)-1-(4-(dimethylcarbamoyl)benzyl)-1H-indole-2-carboxylic acid). Its function is as follows. Small GTPase that acts as an allosteric activator of the canonical mTORC1 complex, an evolutionarily conserved central nutrient sensor that stimulates anabolic reactions and macromolecule biosynthesis to promote cellular biomass generation and growth. In response to nutrients, growth factors or amino acids, specifically activates the protein kinase activity of MTOR, the catalytic component of the mTORC1 complex: acts by causing a conformational change that allows the alignment of residues in the active site of MTOR, thereby enhancing the phosphorylation of ribosomal protein S6 kinase (RPS6KB1 and RPS6KB2) and EIF4EBP1 (4E-BP1). RHEB is also required for localization of the TSC-TBC complex to lysosomal membranes. In response to starvation, RHEB is inactivated by the TSC-TBC complex, preventing activation of mTORC1. Has low intrinsic GTPase activity. The protein is GTP-binding protein Rheb of Homo sapiens (Human).